A 297-amino-acid polypeptide reads, in one-letter code: Pyridoxal 5'-phosphate synthase subunit SNZ1 (297 aa).

D23 contributes to the D-ribose 5-phosphate binding site. The active-site Schiff-base intermediate with D-ribose 5-phosphate is the K80. G152 is a binding site for D-ribose 5-phosphate. Position 164 (R164) interacts with D-glyceraldehyde 3-phosphate. D-ribose 5-phosphate-binding positions include G214 and 235–236; that span reads GS.

Belongs to the PdxS/SNZ family. As to quaternary structure, homohexamer. Interacts with AIM18.

It catalyses the reaction aldehydo-D-ribose 5-phosphate + D-glyceraldehyde 3-phosphate + L-glutamine = pyridoxal 5'-phosphate + L-glutamate + phosphate + 3 H2O + H(+). It functions in the pathway cofactor biosynthesis; pyridoxal 5'-phosphate biosynthesis. Catalyzes the formation of pyridoxal 5'-phosphate from ribose 5-phosphate (RBP), glyceraldehyde 3-phosphate (G3P) and ammonia. The ammonia is provided by a SNO isoform. Can also use ribulose 5-phosphate and dihydroxyacetone phosphate as substrates, resulting from enzyme-catalyzed isomerization of RBP and G3P, respectively. The chain is Pyridoxal 5'-phosphate synthase subunit SNZ1 (SNZ1) from Saccharomyces cerevisiae (strain ATCC 204508 / S288c) (Baker's yeast).